We begin with the raw amino-acid sequence, 142 residues long: Pro-opiomelanocortin (142 aa).

A propeptide spanning residues 1-8 is cleaved from the precursor; sequence SEPGRREG. Val23 carries the valine amide modification. A Phosphoserine modification is found at Ser41.

It belongs to the POMC family. Specific enzymatic cleavages at paired basic residues yield the different active peptides. ACTH and MSH are produced by the pituitary gland.

It is found in the secreted. Stimulates the adrenal glands to release cortisol. Its function is as follows. Anorexigenic peptide. Increases the pigmentation of skin by increasing melanin production in melanocytes. Functionally, increases the pigmentation of skin by increasing melanin production in melanocytes. In terms of biological role, endogenous orexigenic opiate. Endogenous opiate. This Neovison vison (American mink) protein is Pro-opiomelanocortin (POMC).